We begin with the raw amino-acid sequence, 230 residues long: Secretory carrier-associated membrane protein 4 (230 aa).

Topologically, residues 1–39 (MSGKENNFPPLPKFIPLKPCFYQNFSDEIPIEHQVLVKR) are cytoplasmic. 4 consecutive transmembrane segments (helical) span residues 40 to 60 (IYRL…ACLA), 61 to 81 (WWIA…LLLF), 105 to 125 (FMAF…QAVG), and 149 to 169 (VVML…AVMI). Over 170-230 (MKVHSIYRGT…SYPASGGQWP (61 aa)) the chain is Cytoplasmic. Residue Thr-194 is modified to Phosphothreonine. A disordered region spans residues 208–230 (FSGNSLPEYPTVPSYPASGGQWP).

Belongs to the SCAMP family.

Its subcellular location is the membrane. Probably involved in membrane protein trafficking. The protein is Secretory carrier-associated membrane protein 4 (SCAMP4) of Bos taurus (Bovine).